Consider the following 174-residue polypeptide: Cell division protein FtsL (174 aa).

The Cytoplasmic portion of the chain corresponds to 1–38; sequence MLAAPRELSYIPQPVVSSKQSPRSGLSNRRRESRARQK. A helical transmembrane segment spans residues 39–59; the sequence is ILLLGLVLMGFVIGLSLTFLT. At 60–174 the chain is on the extracellular side; it reads MQVLIKGYKI…EPARQAGAGV (115 aa).

The protein belongs to the FtsL family.

It is found in the cell membrane. Its function is as follows. Essential cell division protein. In Moorella thermoacetica (strain ATCC 39073 / JCM 9320), this protein is Cell division protein FtsL.